Reading from the N-terminus, the 450-residue chain is Sulfide:quinone oxidoreductase, mitochondrial (450 aa).

FAD is bound by residues 53–54 (AG), E75, Q83, and V118. 2 positions are modified to N6-acetyllysine: K134 and K173. Catalysis depends on C201, which acts as the Cysteine persulfide intermediate. A disulfide bridge connects residues C201 and C379. D336 lines the FAD pocket. At S343 the chain carries Phosphoserine. 344–347 (KTAA) is a binding site for FAD. The active-site Cysteine persulfide intermediate is the C379.

The protein belongs to the SQRD family. It depends on FAD as a cofactor.

The protein resides in the mitochondrion. It carries out the reaction ubiquinone-10 + hydrogen sulfide + sulfite + 2 H(+) = ubiquinol-10 + thiosulfate. The catalysed reaction is a quinone + hydrogen sulfide + glutathione + H(+) = S-sulfanylglutathione + a quinol. The enzyme catalyses ubiquinone-10 + hydrogen sulfide + glutathione + H(+) = S-sulfanylglutathione + ubiquinol-10. In terms of biological role, catalyzes the oxidation of hydrogen sulfide with the help of a quinone, such as ubiquinone-10, giving rise to thiosulfate and ultimately to sulfane (molecular sulfur) atoms. Requires an additional electron acceptor; can use sulfite, sulfide or cyanide (in vitro). It is believed the in vivo electron acceptor is glutathione. The protein is Sulfide:quinone oxidoreductase, mitochondrial of Mus musculus (Mouse).